Here is a 271-residue protein sequence, read N- to C-terminus: Formamidopyrimidine-DNA glycosylase (271 aa).

The active-site Schiff-base intermediate with DNA is the P2. The active-site Proton donor is E3. K57 (proton donor; for beta-elimination activity) is an active-site residue. DNA is bound by residues H90, R109, and K151. The segment at 236–270 (HVYSRGGETCTSCGNLLSEIRLGQRTTVFCGICQT) adopts an FPG-type zinc-finger fold. R260 acts as the Proton donor; for delta-elimination activity in catalysis.

This sequence belongs to the FPG family. In terms of assembly, monomer. Zn(2+) is required as a cofactor.

The enzyme catalyses Hydrolysis of DNA containing ring-opened 7-methylguanine residues, releasing 2,6-diamino-4-hydroxy-5-(N-methyl)formamidopyrimidine.. It carries out the reaction 2'-deoxyribonucleotide-(2'-deoxyribose 5'-phosphate)-2'-deoxyribonucleotide-DNA = a 3'-end 2'-deoxyribonucleotide-(2,3-dehydro-2,3-deoxyribose 5'-phosphate)-DNA + a 5'-end 5'-phospho-2'-deoxyribonucleoside-DNA + H(+). Functionally, involved in base excision repair of DNA damaged by oxidation or by mutagenic agents. Acts as a DNA glycosylase that recognizes and removes damaged bases. Has a preference for oxidized purines, such as 7,8-dihydro-8-oxoguanine (8-oxoG). Has AP (apurinic/apyrimidinic) lyase activity and introduces nicks in the DNA strand. Cleaves the DNA backbone by beta-delta elimination to generate a single-strand break at the site of the removed base with both 3'- and 5'-phosphates. The polypeptide is Formamidopyrimidine-DNA glycosylase (Shewanella baltica (strain OS195)).